Consider the following 164-residue polypeptide: S-ribosylhomocysteine lyase (164 aa).

Residues histidine 61, histidine 65, and cysteine 131 each coordinate Fe cation.

It belongs to the LuxS family. In terms of assembly, homodimer. Fe cation serves as cofactor.

The enzyme catalyses S-(5-deoxy-D-ribos-5-yl)-L-homocysteine = (S)-4,5-dihydroxypentane-2,3-dione + L-homocysteine. In terms of biological role, involved in the synthesis of autoinducer 2 (AI-2) which is secreted by bacteria and is used to communicate both the cell density and the metabolic potential of the environment. The regulation of gene expression in response to changes in cell density is called quorum sensing. Catalyzes the transformation of S-ribosylhomocysteine (RHC) to homocysteine (HC) and 4,5-dihydroxy-2,3-pentadione (DPD). The sequence is that of S-ribosylhomocysteine lyase from Bifidobacterium longum subsp. infantis (strain ATCC 15697 / DSM 20088 / JCM 1222 / NCTC 11817 / S12).